Here is a 131-residue protein sequence, read N- to C-terminus: Keratin, high-sulfur matrix protein, IIIA3 (131 aa).

In terms of tissue distribution, wool.

The keratin products of mammalian epidermal derivatives such as wool and hair consist of microfibrils embedded in a rigid matrix of other proteins. The matrix proteins include the high-sulfur and high-tyrosine keratins, having molecular weights of 6-20 kDa, whereas the microfibrils contain the larger, low-sulfur keratins (40-56 kDa). In Ovis aries (Sheep), this protein is Keratin, high-sulfur matrix protein, IIIA3.